Reading from the N-terminus, the 322-residue chain is Undecaprenyl-phosphate 4-deoxy-4-formamido-L-arabinose transferase (322 aa).

Topologically, residues 1–235 (MFEIHPVKKV…TCLTTTPLRM (235 aa)) are cytoplasmic. A helical membrane pass occupies residues 236-256 (LSLLGSIIAIGGFSIAVLLVI). Over 257–269 (LRLTFGPQWAAEG) the chain is Periplasmic. A helical membrane pass occupies residues 270–290 (VFMLFAVLFTFIGAQFIGMGL). The Cytoplasmic portion of the chain corresponds to 291–322 (LGEYIGRIYTDVRARPRYFVQQVIRPSSKENE).

This sequence belongs to the glycosyltransferase 2 family.

The protein localises to the cell inner membrane. It catalyses the reaction UDP-4-deoxy-4-formamido-beta-L-arabinose + di-trans,octa-cis-undecaprenyl phosphate = 4-deoxy-4-formamido-alpha-L-arabinopyranosyl di-trans,octa-cis-undecaprenyl phosphate + UDP. Its pathway is glycolipid biosynthesis; 4-amino-4-deoxy-alpha-L-arabinose undecaprenyl phosphate biosynthesis; 4-amino-4-deoxy-alpha-L-arabinose undecaprenyl phosphate from UDP-4-deoxy-4-formamido-beta-L-arabinose and undecaprenyl phosphate: step 1/2. It functions in the pathway bacterial outer membrane biogenesis; lipopolysaccharide biosynthesis. Its function is as follows. Catalyzes the transfer of 4-deoxy-4-formamido-L-arabinose from UDP to undecaprenyl phosphate. The modified arabinose is attached to lipid A and is required for resistance to polymyxin and cationic antimicrobial peptides. This chain is Undecaprenyl-phosphate 4-deoxy-4-formamido-L-arabinose transferase, found in Escherichia coli (strain SMS-3-5 / SECEC).